We begin with the raw amino-acid sequence, 80 residues long: MSEEEIFNKIKDLIADNFEVDKDSITENTNFMNDLDADSIDLVEFILQLEDEFGAEIPDDEAEKIKTVGDAVSYIKSHQG.

A Carrier domain is found at 4 to 79 (EEIFNKIKDL…DAVSYIKSHQ (76 aa)). Ser-39 bears the O-(pantetheine 4'-phosphoryl)serine mark.

This sequence belongs to the acyl carrier protein (ACP) family. Post-translationally, 4'-phosphopantetheine is transferred from CoA to a specific serine of apo-ACP by AcpS. This modification is essential for activity because fatty acids are bound in thioester linkage to the sulfhydryl of the prosthetic group.

Its subcellular location is the cytoplasm. It participates in lipid metabolism; fatty acid biosynthesis. In terms of biological role, carrier of the growing fatty acid chain in fatty acid biosynthesis. The protein is Acyl carrier protein of Lactobacillus acidophilus (strain ATCC 700396 / NCK56 / N2 / NCFM).